The primary structure comprises 446 residues: tRNA-2-methylthio-N(6)-dimethylallyladenosine synthase (446 aa).

One can recognise an MTTase N-terminal domain in the interval 5–121 (RRFYIQTFGC…LPSLIDDAAS (117 aa)). [4Fe-4S] cluster contacts are provided by cysteine 14, cysteine 50, cysteine 84, cysteine 157, cysteine 161, and cysteine 164. Residues 143-373 (REGRISAFIP…IDLQQEISAE (231 aa)) form the Radical SAM core domain. Positions 376 to 439 (RRQVGTVAEV…SATLSGSREG (64 aa)) constitute a TRAM domain.

This sequence belongs to the methylthiotransferase family. MiaB subfamily. Monomer. [4Fe-4S] cluster is required as a cofactor.

The protein localises to the cytoplasm. The catalysed reaction is N(6)-dimethylallyladenosine(37) in tRNA + (sulfur carrier)-SH + AH2 + 2 S-adenosyl-L-methionine = 2-methylsulfanyl-N(6)-dimethylallyladenosine(37) in tRNA + (sulfur carrier)-H + 5'-deoxyadenosine + L-methionine + A + S-adenosyl-L-homocysteine + 2 H(+). Functionally, catalyzes the methylthiolation of N6-(dimethylallyl)adenosine (i(6)A), leading to the formation of 2-methylthio-N6-(dimethylallyl)adenosine (ms(2)i(6)A) at position 37 in tRNAs that read codons beginning with uridine. The sequence is that of tRNA-2-methylthio-N(6)-dimethylallyladenosine synthase from Chlorobium luteolum (strain DSM 273 / BCRC 81028 / 2530) (Pelodictyon luteolum).